We begin with the raw amino-acid sequence, 171 residues long: 3-hydroxydecanoyl-[acyl-carrier-protein] dehydratase (171 aa).

Histidine 71 is a catalytic residue.

The protein belongs to the thioester dehydratase family. FabA subfamily. As to quaternary structure, homodimer.

It is found in the cytoplasm. It carries out the reaction a (3R)-hydroxyacyl-[ACP] = a (2E)-enoyl-[ACP] + H2O. The enzyme catalyses (3R)-hydroxydecanoyl-[ACP] = (2E)-decenoyl-[ACP] + H2O. It catalyses the reaction (2E)-decenoyl-[ACP] = (3Z)-decenoyl-[ACP]. Its pathway is lipid metabolism; fatty acid biosynthesis. Its function is as follows. Necessary for the introduction of cis unsaturation into fatty acids. Catalyzes the dehydration of (3R)-3-hydroxydecanoyl-ACP to E-(2)-decenoyl-ACP and then its isomerization to Z-(3)-decenoyl-ACP. Can catalyze the dehydratase reaction for beta-hydroxyacyl-ACPs with saturated chain lengths up to 16:0, being most active on intermediate chain length. This Rhizobium meliloti (strain 1021) (Ensifer meliloti) protein is 3-hydroxydecanoyl-[acyl-carrier-protein] dehydratase.